A 230-amino-acid polypeptide reads, in one-letter code: Stachydrine N-demethylase reductase subunit Stc3 (230 aa).

Belongs to the non-flavoprotein flavin reductase family. The system is probably composed of an oxygenase subunit (Stc2) and two reductase subunits (Stc3 and Stc4).

Its function is as follows. Reductase involved in the catabolism of stachydrine (L-proline betaine), a source of carbon and nitrogen. Part of a Rieske-type oxygenase system that catalyzes the demethylation of stachydrine to produce N-methyl-L-proline (monomethylproline). This subunit is probably involved in the transfer of electrons from NAD(P)H to the catalytic subunit Stc2. This is Stachydrine N-demethylase reductase subunit Stc3 from Rhizobium meliloti (strain 1021) (Ensifer meliloti).